The primary structure comprises 316 residues: Bifunctional peptidase and (3S)-lysyl hydroxylase Jmjd7 (316 aa).

The JmjC domain occupies 128–307 (VQKQCSNLPT…LKYSYFQLMD (180 aa)). Fe cation is bound by residues His-178, Asp-180, and His-277.

In terms of assembly, homodimer; disulfide-linked. Interacts with DRG1 and DRG2. The cofactor is Fe(2+).

It is found in the nucleus. It localises to the cytoplasm. The catalysed reaction is L-lysyl-[protein] + 2-oxoglutarate + O2 = (3S)-3-hydroxy-L-lysyl-[protein] + succinate + CO2. Functionally, bifunctional enzyme that acts both as an endopeptidase and 2-oxoglutarate-dependent monooxygenase. Endopeptidase that cleaves histones N-terminal tails at the carboxyl side of methylated arginine or lysine residues, to generate 'tailless nucleosomes', which may trigger transcription elongation. Preferentially recognizes and cleaves monomethylated and dimethylated arginine residues of histones H2, H3 and H4. After initial cleavage, continues to digest histones tails via its aminopeptidase activity. Additionally, may play a role in protein biosynthesis by modifying the translation machinery. Acts as a Fe(2+) and 2-oxoglutarate-dependent monooxygenase, catalyzing (S)-stereospecific hydroxylation at C-3 of 'Lys-22' of DRG1 and 'Lys-21' of DRG2 translation factors (TRAFAC), promoting their interaction with ribonucleic acids (RNA). This chain is Bifunctional peptidase and (3S)-lysyl hydroxylase Jmjd7, found in Mus musculus (Mouse).